An 87-amino-acid chain; its full sequence is Apolipoprotein C-I (87 aa).

The first 26 residues, 1 to 26 (MRFILSLPVLAVVLAMVLEGPAPAQA), serve as a signal peptide directing secretion.

Belongs to the apolipoprotein C1 family.

It localises to the secreted. In terms of biological role, inhibitor of lipoprotein binding to the low density lipoprotein (LDL) receptor, LDL receptor-related protein, and very low density lipoprotein (VLDL) receptor. Associates with high density lipoproteins (HDL) and the triacylglycerol-rich lipoproteins in the plasma and makes up about 10% of the protein of the VLDL and 2% of that of HDL. Appears to interfere directly with fatty acid uptake and is also the major plasma inhibitor of cholesteryl ester transfer protein (CETP). Binds free fatty acids and reduces their intracellular esterification. Modulates the interaction of APOE with beta-migrating VLDL and inhibits binding of beta-VLDL to the LDL receptor-related protein. This is Apolipoprotein C-I (APOC1) from Pteropus alecto (Black flying fox).